A 386-amino-acid chain; its full sequence is MATTKSFLILFFMILATTSSTCAKLEEMVTVLSIDGGGIKGIIPAIILEFLEGQLQEVDNNKDARLADYFDVIGGTSTGGLLTAMITTPNENNRPFAAAKDIVPFYFEHGPHIFNYSGSIIGPMYDGKYLLQVLQEKLGETRVHQALTEVAISSFDIKTNKPVIFTKSNLAKSPELDAKMYDICYSTAAAPIYFPPHYFITHTSNGDIYEFNLVDGGVATVGDPALLSLSVATRLAQEDPAFSSIKSLDYKQMLLLSLGTGTNSEFDKTYTAQEAAKWGPLRWMLAIQQMTNAASSYMTDYYISTVFQARHSQNNYLRVQENALTGTTTEMDDASEANMELLVQVGETLLKKPVSKDSPETYEEALKRFAKLLSDRKKLRASKASY.

The signal sequence occupies residues 1 to 23 (MATTKSFLILFFMILATTSSTCA). The PNPLA domain occupies 32 to 229 (LSIDGGGIKG…TVGDPALLSL (198 aa)). The short motif at 36–41 (GGGIKG) is the GXGXXG element. The GXSXG motif lies at 75-79 (GTSTG). Serine 77 functions as the Nucleophile in the catalytic mechanism. Asparagine 115 carries an N-linked (GlcNAc...) asparagine glycan. Aspartate 215 acts as the Proton acceptor in catalysis. The DGA/G motif lies at 215–217 (DGG). A coiled-coil region spans residues 321-381 (ENALTGTTTE…LLSDRKKLRA (61 aa)).

This sequence belongs to the patatin family. Tuber.

It is found in the vacuole. Functionally, probable lipolytic acyl hydrolase (LAH), an activity which is thought to be involved in the response of tubers to pathogens. The protein is Patatin-14 of Solanum tuberosum (Potato).